The chain runs to 82 residues: Small ribosomal subunit protein bS16 (82 aa).

The protein belongs to the bacterial ribosomal protein bS16 family.

This is Small ribosomal subunit protein bS16 from Mannheimia succiniciproducens (strain KCTC 0769BP / MBEL55E).